The chain runs to 117 residues: UPF0342 protein LEUM_1212 (117 aa).

It belongs to the UPF0342 family.

This is UPF0342 protein LEUM_1212 from Leuconostoc mesenteroides subsp. mesenteroides (strain ATCC 8293 / DSM 20343 / BCRC 11652 / CCM 1803 / JCM 6124 / NCDO 523 / NBRC 100496 / NCIMB 8023 / NCTC 12954 / NRRL B-1118 / 37Y).